We begin with the raw amino-acid sequence, 374 residues long: Alcohol dehydrogenase class-3 (374 aa).

Position 2 is an N-acetylserine (Ser-2). Zn(2+) is bound by residues Cys-45, His-67, Cys-97, Cys-100, Cys-103, Cys-111, and Cys-174. Lys-233 bears the N6-succinyllysine mark. Ser-247 carries the post-translational modification Phosphoserine. At Lys-315 the chain carries N6-succinyllysine. Ser-324 and Ser-351 each carry phosphoserine.

This sequence belongs to the zinc-containing alcohol dehydrogenase family. Class-III subfamily. In terms of assembly, homodimer. It depends on Zn(2+) as a cofactor.

It localises to the cytoplasm. It carries out the reaction a primary alcohol + NAD(+) = an aldehyde + NADH + H(+). It catalyses the reaction a secondary alcohol + NAD(+) = a ketone + NADH + H(+). The catalysed reaction is S-(hydroxymethyl)glutathione + NADP(+) = S-formylglutathione + NADPH + H(+). The enzyme catalyses S-(hydroxymethyl)glutathione + NAD(+) = S-formylglutathione + NADH + H(+). It carries out the reaction 20-oxo-(5Z,8Z,11Z,14Z)-eicosatetraenoate + NAD(+) + H2O = (5Z,8Z,11Z,14Z)-eicosatetraenedioate + NADH + 2 H(+). It catalyses the reaction 20-hydroxy-(5Z,8Z,11Z,14Z)-eicosatetraenoate + NAD(+) = 20-oxo-(5Z,8Z,11Z,14Z)-eicosatetraenoate + NADH + H(+). The catalysed reaction is S-nitrosoglutathione + NADH + H(+) = S-(hydroxysulfenamide)glutathione + NAD(+). Functionally, catalyzes the oxidation of long-chain primary alcohols and the oxidation of S-(hydroxymethyl) glutathione. Also oxidizes long chain omega-hydroxy fatty acids, such as 20-HETE, producing both the intermediate aldehyde, 20-oxoarachidonate and the end product, a dicarboxylic acid, (5Z,8Z,11Z,14Z)-eicosatetraenedioate. Class-III ADH is remarkably ineffective in oxidizing ethanol. Required for clearance of cellular formaldehyde, a cytotoxic and carcinogenic metabolite that induces DNA damage. Also acts as a S-nitroso-glutathione reductase by catalyzing the NADH-dependent reduction of S-nitrosoglutathione, thereby regulating protein S-nitrosylation. The protein is Alcohol dehydrogenase class-3 of Equus caballus (Horse).